Consider the following 404-residue polypeptide: Arginine biosynthesis bifunctional protein ArgJ (404 aa).

6 residues coordinate substrate: Thr156, Lys182, Thr193, Glu277, Asn399, and Ser404. Thr193 serves as the catalytic Nucleophile.

The protein belongs to the ArgJ family. As to quaternary structure, heterotetramer of two alpha and two beta chains.

It localises to the cytoplasm. It carries out the reaction N(2)-acetyl-L-ornithine + L-glutamate = N-acetyl-L-glutamate + L-ornithine. It catalyses the reaction L-glutamate + acetyl-CoA = N-acetyl-L-glutamate + CoA + H(+). It participates in amino-acid biosynthesis; L-arginine biosynthesis; L-ornithine and N-acetyl-L-glutamate from L-glutamate and N(2)-acetyl-L-ornithine (cyclic): step 1/1. Its pathway is amino-acid biosynthesis; L-arginine biosynthesis; N(2)-acetyl-L-ornithine from L-glutamate: step 1/4. Its function is as follows. Catalyzes two activities which are involved in the cyclic version of arginine biosynthesis: the synthesis of N-acetylglutamate from glutamate and acetyl-CoA as the acetyl donor, and of ornithine by transacetylation between N(2)-acetylornithine and glutamate. The sequence is that of Arginine biosynthesis bifunctional protein ArgJ from Chlorobaculum tepidum (strain ATCC 49652 / DSM 12025 / NBRC 103806 / TLS) (Chlorobium tepidum).